The primary structure comprises 571 residues: FAD-binding monooxygenase VdtE (571 aa).

FAD contacts are provided by residues 44–47 (VWYW), 56–57 (DS), and Tyr-62. 54 to 56 (RVD) contributes to the NADP(+) binding site. NADP(+) is bound by residues 187–193 (TGASAVQ) and 210–211 (RT).

Belongs to the FAD-binding monooxygenase family. FAD is required as a cofactor.

It catalyses the reaction 9,10-dihydroxy-7-methoxy-3-(2-oxopropyl)-1H-benzo[g]isochromen-1-one + NADPH + O2 + H(+) = methyl 2-[(3S)-9,10-dihydroxy-7-methoxy-1-oxo-1H,3H,4H-naphtho[2,3-c]pyran-3-yl]acetate + NADP(+) + H2O. It carries out the reaction (3S)-9,10-dihydroxy-7-methoxy-3-(2-oxopropyl)-1H,3H,4H-naphtho[2,3-c]pyran-1-one + NADPH + O2 + H(+) = semiviriditoxin + NADP(+) + H2O. It functions in the pathway secondary metabolite biosynthesis. Functionally, FAD-binding monooxygenase; part of the gene cluster that mediates the biosynthesis of viriditoxin, one of the 'classical' secondary metabolites produced by fungi and that has antibacterial activity. The first step is performed by the polyketide synthase VdtA which condenses one acetyl-CoA and 6 malonyl-CoA units to form the heptaketide monomer backbone of viriditoxin. The product of VdtA is then O-methylated on C7 by the O-methyltransferase VdtC. The O-methyl group is important for the stereoselective coupling of the monomers at the final step of viriditoxin biosynthesis. The short-chain dehydrogenase/reductase VdtF then acts as a stereospecific reductase converting the pyrone to dihydropyrone via the reduction of the C3-C4 double bond. The FAD-binding monooxygenase VdtE then converts the ketone group into a methyl-ester group to yield semi-viriditoxin. Finally, the laccase VdtB is involved in dimerization of 2 semi-viriditoxin molecules to yield the final viriditoxin. VdtB is responsible for the regioselective 6,6'-coupling of semi-viriditoxin, which yields (M)-viriditoxin and (P)-viriditoxin at a ratio of 1:2. The non-catalytic carboxylesterase-like protein VdtD affects the stereochemistical outcome of the coupling. The highly reducing polyketide synthase VdtX is not involved in viriditoxin synthesis, but might possibly play a role in the production of additional metabolites not identified yet. This is FAD-binding monooxygenase VdtE from Byssochlamys spectabilis (Paecilomyces variotii).